We begin with the raw amino-acid sequence, 145 residues long: Transcriptional regulator MraZ (145 aa).

SpoVT-AbrB domains are found at residues 7-54 (NATN…GPDL) and 83-126 (GVFM…QPQA).

It belongs to the MraZ family. In terms of assembly, forms oligomers.

The protein resides in the cytoplasm. It is found in the nucleoid. The sequence is that of Transcriptional regulator MraZ from Rhizobium johnstonii (strain DSM 114642 / LMG 32736 / 3841) (Rhizobium leguminosarum bv. viciae).